A 248-amino-acid chain; its full sequence is Pulmonary surfactant-associated protein A (248 aa).

Positions 1–17 are cleaved as a signal peptide; that stretch reads MWLRCLALALTLLMVSG. The N-linked (GlcNAc...) asparagine glycan is linked to N20. The 73-residue stretch at 28 to 100 folds into the Collagen-like domain; sequence GNPGIPGTPG…PGERGPPGLP (73 aa). A disordered region spans residues 29-103; sequence NPGIPGTPGS…RGPPGLPASL (75 aa). 9 positions are modified to 4-hydroxyproline: P30, P33, P36, P42, P54, P57, P63, P67, and P70. Basic and acidic residues predominate over residues 42–51; it reads PGRDGRDGVK. Positions 54–65 are enriched in pro residues; sequence PGPPGPLGPPGG. Basic and acidic residues predominate over residues 84–93; the sequence is ERGEKGEPGE. The 117-residue stretch at 132-248 folds into the C-type lectin domain; the sequence is LVVGRKVFSS…LQYRLAICEF (117 aa). Cystine bridges form between C155–C246 and C224–C238. N207 carries N-linked (GlcNAc...) asparagine glycosylation. Residues E215, R217, and N234 each contribute to the Ca(2+) site.

Belongs to the SFTPA family. As to quaternary structure, oligomeric complex of 6 set of homotrimers.

The protein localises to the secreted. Its subcellular location is the extracellular space. The protein resides in the extracellular matrix. It localises to the surface film. In presence of calcium ions, it binds to surfactant phospholipids and contributes to lower the surface tension at the air-liquid interface in the alveoli of the mammalian lung and is essential for normal respiration. Enhances the expression of MYO18A/SP-R210 on alveolar macrophages. The chain is Pulmonary surfactant-associated protein A (SFTPA1) from Canis lupus familiaris (Dog).